The primary structure comprises 163 residues: K88 minor fimbrial subunit FaeF (163 aa).

An N-terminal signal peptide occupies residues 1-22 (MKKTMMAAALVLSALSIQSALA).

It localises to the fimbrium. Functionally, K88 minor fimbrial subunit, plays an essential role in the biogenesis of the K88 fimbriae. required at some step in the initiation and/or elongation of the K88 fimbriae. This Escherichia coli protein is K88 minor fimbrial subunit FaeF (faeF).